Here is a 350-residue protein sequence, read N- to C-terminus: Probable transposase-like protein At4g04430 (350 aa).

2 disordered regions span residues M1–N57 and Q307–N328. The span at S30–V43 shows a compositional bias: low complexity.

This sequence belongs to the transposase 24 family.

The protein is Probable transposase-like protein At4g04430 of Arabidopsis thaliana (Mouse-ear cress).